The sequence spans 465 residues: MGSGKAFLFSPSLLWSQTRGVRLIFLLLTLHLGNCVDKADDEDDEDLTMNKTWVLAPKIHEGDITQILNSLLQGYDNKLRPDIGVRPTVIETDVYVNSIGPVDPINMEYTIDIIFAQTWFDSRLKFNSTMKVLMLNSNMVGKIWIPDTFFRNSRKSDAHWITTPNRLLRIWSDGRVLYTLRLTINAECYLQLHNFPMDEHSCPLEFSSYGYPKNEIEYKWKKPSVEVADPKYWRLYQFAFVGLRNSTEISHTISGDYIIMTIFFDLSRRMGYFTIQTYIPCILTVVLSWVSFWINKDAVPARTSLGITTVLTMTTLSTIARKSLPKVSYVTAMDLFVSVCFIFVFAALMEYGTLHYFTSNNKGKTTRGRKLKNKTSASPGLHAGSTLIPMNSISLPQGEDDYGYQCLEGKDCTSFFCCFDDCRTGSWREGRIHIRIAKIDSYSRIFFPTAFALFNLVYWVGYLYL.

The first 20 residues, 1-20 (MGSGKAFLFSPSLLWSQTRG), serve as a signal peptide directing secretion. The Extracellular portion of the chain corresponds to 21-273 (VRLIFLLLTL…FDLSRRMGYF (253 aa)). N-linked (GlcNAc...) asparagine glycosylation is found at Asn50 and Asn127. Cysteines 188 and 202 form a disulfide. The N-linked (GlcNAc...) asparagine glycan is linked to Asn245. Residues 274-294 (TIQTYIPCILTVVLSWVSFWI) traverse the membrane as a helical segment. Topologically, residues 295 to 300 (NKDAVP) are cytoplasmic. Residues 301–320 (ARTSLGITTVLTMTTLSTIA) traverse the membrane as a helical segment. Residues 321-328 (RKSLPKVS) are Extracellular-facing. Residues 329–349 (YVTAMDLFVSVCFIFVFAALM) form a helical membrane-spanning segment. Residues 350–444 (EYGTLHYFTS…RIAKIDSYSR (95 aa)) are Cytoplasmic-facing. The helical transmembrane segment at 445-465 (IFFPTAFALFNLVYWVGYLYL) threads the bilayer.

Belongs to the ligand-gated ion channel (TC 1.A.9) family. Gamma-aminobutyric acid receptor (TC 1.A.9.5) subfamily. GABRG1 sub-subfamily. As to quaternary structure, heteropentamer, formed by a combination of alpha (GABRA1-6), beta (GABRB1-3), gamma (GABRG1-3), delta (GABRD), epsilon (GABRE), rho (GABRR1-3), pi (GABRP) and theta (GABRQ) chains, each subunit exhibiting distinct physiological and pharmacological properties. Post-translationally, may be palmitoylated. In terms of tissue distribution, expressed in brain.

It is found in the postsynaptic cell membrane. It localises to the cell membrane. The enzyme catalyses chloride(in) = chloride(out). Gamma subunit of the heteropentameric ligand-gated chloride channel gated by gamma-aminobutyric acid (GABA), a major inhibitory neurotransmitter in the brain. GABA-gated chloride channels, also named GABA(A) receptors (GABAAR), consist of five subunits arranged around a central pore and contain GABA active binding site(s) located at the alpha and beta subunit interface(s). When activated by GABA, GABAARs selectively allow the flow of chloride anions across the cell membrane down their electrochemical gradient. Chloride influx into the postsynaptic neuron following GABAAR opening decreases the neuron ability to generate a new action potential, thereby reducing nerve transmission. The chain is Gamma-aminobutyric acid receptor subunit gamma-1 from Mus musculus (Mouse).